The following is a 186-amino-acid chain: Mediator of RNA polymerase II transcription subunit 29 (186 aa).

Positions methionine 1–glutamine 12 are enriched in polar residues. A disordered region spans residues methionine 1–glutamine 41. A compositionally biased stretch (low complexity) spans glycine 25–glutamine 41.

It belongs to the Mediator complex subunit 29 family. As to quaternary structure, component of the Mediator complex.

It is found in the nucleus. Its function is as follows. Component of the Mediator complex, a coactivator involved in the regulated transcription of nearly all RNA polymerase II-dependent genes. Mediator functions as a bridge to convey information from gene-specific regulatory proteins to the basal RNA polymerase II transcription machinery. Mediator is recruited to promoters by direct interactions with regulatory proteins and serves as a scaffold for the assembly of a functional preinitiation complex with RNA polymerase II and the general transcription factors. The sequence is that of Mediator of RNA polymerase II transcription subunit 29 (med29) from Xenopus laevis (African clawed frog).